Reading from the N-terminus, the 250-residue chain is Triosephosphate isomerase (250 aa).

10-12 is a binding site for substrate; it reads NWK. His-96 (electrophile) is an active-site residue. Glu-168 functions as the Proton acceptor in the catalytic mechanism. Substrate contacts are provided by residues Gly-174, Ser-214, and 235 to 236; that span reads GG.

It belongs to the triosephosphate isomerase family. Homodimer.

It is found in the cytoplasm. The catalysed reaction is D-glyceraldehyde 3-phosphate = dihydroxyacetone phosphate. The protein operates within carbohydrate biosynthesis; gluconeogenesis. It participates in carbohydrate degradation; glycolysis; D-glyceraldehyde 3-phosphate from glycerone phosphate: step 1/1. Involved in the gluconeogenesis. Catalyzes stereospecifically the conversion of dihydroxyacetone phosphate (DHAP) to D-glyceraldehyde-3-phosphate (G3P). This Streptococcus suis (strain 98HAH33) protein is Triosephosphate isomerase.